The sequence spans 190 residues: Xanthine phosphoribosyltransferase (190 aa).

2 residues coordinate xanthine: Leu-20 and Asn-27. 128–132 lines the 5-phospho-alpha-D-ribose 1-diphosphate pocket; it reads ANGKA. Lys-156 serves as a coordination point for xanthine.

This sequence belongs to the purine/pyrimidine phosphoribosyltransferase family. Xpt subfamily. Homodimer.

It localises to the cytoplasm. It catalyses the reaction XMP + diphosphate = xanthine + 5-phospho-alpha-D-ribose 1-diphosphate. Its pathway is purine metabolism; XMP biosynthesis via salvage pathway; XMP from xanthine: step 1/1. In terms of biological role, converts the preformed base xanthine, a product of nucleic acid breakdown, to xanthosine 5'-monophosphate (XMP), so it can be reused for RNA or DNA synthesis. The chain is Xanthine phosphoribosyltransferase from Ruminiclostridium cellulolyticum (strain ATCC 35319 / DSM 5812 / JCM 6584 / H10) (Clostridium cellulolyticum).